The primary structure comprises 1110 residues: ATP-dependent DNA helicase MPH1 (1110 aa).

Residues leucine 24–arginine 34 are compositionally biased toward polar residues. Disordered regions lie at residues leucine 24 to lysine 165, phenylalanine 178 to asparagine 212, and threonine 236 to histidine 305. Basic and acidic residues-rich tracts occupy residues asparagine 42–glutamate 57 and phenylalanine 178–alanine 188. The segment covering glutamate 189 to glycine 199 has biased composition (acidic residues). Polar residues-rich tracts occupy residues isoleucine 246–leucine 273 and glutamine 287–glutamate 300. The 169-residue stretch at isoleucine 331–arginine 499 folds into the Helicase ATP-binding domain. ATP is bound at residue leucine 344 to threonine 351. A DEAH box motif is present at residues aspartate 447–histidine 450. A Helicase C-terminal domain is found at isoleucine 675–serine 846. Disordered regions lie at residues glutamate 867–glycine 937, valine 1013–threonine 1055, and asparagine 1069–glutamate 1110. Over residues arginine 879–phenylalanine 890 the composition is skewed to basic residues. Composition is skewed to basic and acidic residues over residues histidine 891 to phenylalanine 900, glutamine 1041 to threonine 1055, and glutamate 1077 to proline 1093.

Belongs to the DEAD box helicase family. DEAH subfamily. FANCM sub-subfamily. As to quaternary structure, interacts with the MHF histone-fold complex to form the FANCM-MHF complex.

Its subcellular location is the nucleus. The enzyme catalyses ATP + H2O = ADP + phosphate + H(+). ATP-dependent DNA helicase involved in DNA damage repair by homologous recombination and in genome maintenance. Capable of unwinding D-loops. Plays a role in limiting crossover recombinants during mitotic DNA double-strand break (DSB) repair. Component of a FANCM-MHF complex which promotes gene conversion at blocked replication forks, probably by reversal of the stalled fork. In Coccidioides immitis (strain RS) (Valley fever fungus), this protein is ATP-dependent DNA helicase MPH1.